The chain runs to 222 residues: UPF0502 protein XCV4380 (222 aa).

This sequence belongs to the UPF0502 family.

This is UPF0502 protein XCV4380 from Xanthomonas euvesicatoria pv. vesicatoria (strain 85-10) (Xanthomonas campestris pv. vesicatoria).